Consider the following 311-residue polypeptide: Meteorin-like protein (311 aa).

An N-terminal signal peptide occupies residues 1-45 (MRGVVWAARRRAGQQWPRSPGPGPGPPPPPPLLLLLLLLLGGASA). Residues Cys52 and Cys75 are joined by a disulfide bond. Residue Asn103 is glycosylated (N-linked (GlcNAc...) asparagine). Intrachain disulfides connect Cys107–Cys143, Cys188–Cys260, Cys191–Cys284, and Cys201–Cys306.

Belongs to the meteorin family. Abundantly expressed in adipose tissue.

Its subcellular location is the secreted. In terms of biological role, hormone induced following exercise or cold exposure that promotes energy expenditure. Induced either in the skeletal muscle after exercise or in adipose tissue following cold exposure and is present in the circulation. Able to stimulate energy expenditure associated with the browning of the white fat depots and improves glucose tolerance. Does not promote an increase in a thermogenic gene program via direct action on adipocytes, but acts by stimulating several immune cell subtypes to enter the adipose tissue and activate their prothermogenic actions. Stimulates an eosinophil-dependent increase in IL4 expression and promotes alternative activation of adipose tissue macrophages, which are required for the increased expression of the thermogenic and anti-inflammatory gene programs in fat. Required for some cold-induced thermogenic responses, suggesting a role in metabolic adaptations to cold temperatures. This Rattus norvegicus (Rat) protein is Meteorin-like protein (Metrnl).